Here is a 132-residue protein sequence, read N- to C-terminus: Small ribosomal subunit protein uS8 (132 aa).

The protein belongs to the universal ribosomal protein uS8 family. Part of the 30S ribosomal subunit. Contacts proteins S5 and S12.

Its function is as follows. One of the primary rRNA binding proteins, it binds directly to 16S rRNA central domain where it helps coordinate assembly of the platform of the 30S subunit. The protein is Small ribosomal subunit protein uS8 of Staphylococcus aureus (strain USA300).